A 25-amino-acid polypeptide reads, in one-letter code: Aurein-5.1 (25 aa).

Belongs to the frog skin active peptide (FSAP) family. Aurein subfamily. In terms of tissue distribution, expressed by the skin dorsal glands.

The protein resides in the secreted. In terms of biological role, has no antimicrobial or anticancer activity. This is Aurein-5.1 from Ranoidea aurea (Green and golden bell frog).